The following is a 375-amino-acid chain: uncharacterized protein (375 aa).

This sequence belongs to the mimivirus L17x/L18x family.

This is an uncharacterized protein from Acanthamoeba polyphaga mimivirus (APMV).